The following is a 449-amino-acid chain: Xylose isomerase (449 aa).

Active-site residues include H103 and D106. E234, E270, H273, D298, D309, D311, and D342 together coordinate Mg(2+).

It belongs to the xylose isomerase family. Homotetramer. The cofactor is Mg(2+).

It localises to the cytoplasm. The catalysed reaction is alpha-D-xylose = alpha-D-xylulofuranose. Its function is as follows. Involved in D-xylose catabolism. The sequence is that of Xylose isomerase (xylA) from Lactiplantibacillus pentosus (Lactobacillus pentosus).